The chain runs to 341 residues: Processive diacylglycerol beta-glycosyltransferase (341 aa).

This sequence belongs to the glycosyltransferase 2 family. The cofactor is Mg(2+).

The protein resides in the cell membrane. It carries out the reaction a 1,2-diacyl-sn-glycerol + UDP-alpha-D-glucose = a 1,2-diacyl-3-O-(beta-D-glucopyranosyl)-sn-glycerol + UDP + H(+). It catalyses the reaction a 1,2-diacyl-sn-glycerol + UDP-alpha-D-galactose = a 1,2-diacyl-3-O-(beta-D-galactosyl)-sn-glycerol + UDP + H(+). The enzyme catalyses a 1,2-diacyl-3-O-(beta-D-galactosyl)-sn-glycerol + UDP-alpha-D-glucose = a 1,2-diacyl-3-O-[beta-D-glucopyranosyl-(1-&gt;6)-beta-D-galactopyranosyl]-sn-glycerol + UDP + H(+). The catalysed reaction is a 1,2-diacyl-3-O-(beta-D-galactosyl)-sn-glycerol + UDP-alpha-D-galactose = a 1,2-diacyl-3-O-[beta-D-galactosyl-(1-&gt;6)-beta-D-galactosyl]-sn-glycerol + UDP + H(+). With respect to regulation, activated by the negatively charged lipid phosphatidylglycerol (PG). Its function is as follows. Processive glycosyltransferase involved in the biosynthesis of both the non-bilayer-prone beta-monoglycosyldiacylglycerol and the bilayer-forming membrane lipid glucosyl-galactosyldiacylglycerol and digalactosyl-diacylglycerol. These components contribute to regulate the properties and stability of the membrane. Catalyzes sequentially the transfers of glucosyl or galactosyl residues from UDP-Glc or UDP-Gal to diacylglycerol (DAG) acceptor to form the corresponding beta-glycosyl-DAG (3-O-(beta-D-glycopyranosyl)-1,2-diacyl-sn-glycerol). Then, only beta-galactosyl-DAG (3-O-(beta-D-galactopyranosyl)-1,2-diacyl-sn-glycerol) can act as acceptor to give the beta-glycosyl-beta-galactosyl-DAG product (3-O-(beta-D-glycopyranosyl-(1-&gt;6)-D-galactopyranosyl)-1,2-diacyl-sn-glycerol). It can also use alpha-Gal-beta-Gal-DAG, ceramide (Cer) and beta-Gal-Cer as sugar acceptors. The enzyme is supposed to be mainly a galactosyltransferase, with higher glycosyltransferase activity for the addition of the second glycosyl on beta-Gal-DAG as acceptor. The main glycolipid produced in vivo is beta-Glc-beta-Gal-DAG with a beta-1,6 linkage. This chain is Processive diacylglycerol beta-glycosyltransferase, found in Mycoplasma pneumoniae (strain ATCC 29342 / M129 / Subtype 1) (Mycoplasmoides pneumoniae).